A 206-amino-acid polypeptide reads, in one-letter code: Probable GTP-binding protein EngB (206 aa).

In terms of domain architecture, EngB-type G spans 24 to 198; sequence QGREVAFAGR…HARLDEWLGL (175 aa). Residues 32 to 39, 59 to 63, 77 to 80, 144 to 147, and 177 to 179 each bind GTP; these read GRSNVGKS, GRTQL, DLPG, TKAD, and FSA. Mg(2+) contacts are provided by serine 39 and threonine 61.

It belongs to the TRAFAC class TrmE-Era-EngA-EngB-Septin-like GTPase superfamily. EngB GTPase family. The cofactor is Mg(2+).

In terms of biological role, necessary for normal cell division and for the maintenance of normal septation. The chain is Probable GTP-binding protein EngB from Alkalilimnicola ehrlichii (strain ATCC BAA-1101 / DSM 17681 / MLHE-1).